The following is a 176-amino-acid chain: HTH-type transcriptional regulator DctR (176 aa).

One can recognise an HTH luxR-type domain in the interval 109-174; it reads VPEAAVSLSR…ELVRHQHIDY (66 aa). The H-T-H motif DNA-binding region spans 133 to 152; it reads TEDILEKLKISLKTFYCHKH.

May act as a transcriptional regulator of dctA. The protein is HTH-type transcriptional regulator DctR (dctR) of Escherichia coli (strain K12).